We begin with the raw amino-acid sequence, 179 residues long: ATP-dependent protease subunit HslV (179 aa).

The active site involves Thr-6. Positions 162, 165, and 168 each coordinate Na(+).

The protein belongs to the peptidase T1B family. HslV subfamily. As to quaternary structure, a double ring-shaped homohexamer of HslV is capped on each side by a ring-shaped HslU homohexamer. The assembly of the HslU/HslV complex is dependent on binding of ATP.

Its subcellular location is the cytoplasm. It catalyses the reaction ATP-dependent cleavage of peptide bonds with broad specificity.. Allosterically activated by HslU binding. Its function is as follows. Protease subunit of a proteasome-like degradation complex believed to be a general protein degrading machinery. The protein is ATP-dependent protease subunit HslV of Maridesulfovibrio salexigens (strain ATCC 14822 / DSM 2638 / NCIMB 8403 / VKM B-1763) (Desulfovibrio salexigens).